A 280-amino-acid chain; its full sequence is 4-diphosphocytidyl-2-C-methyl-D-erythritol kinase (280 aa).

Residue Lys-8 is part of the active site. Position 91 to 101 (Pro-91 to Ser-101) interacts with ATP. Asp-133 is an active-site residue.

This sequence belongs to the GHMP kinase family. IspE subfamily.

The enzyme catalyses 4-CDP-2-C-methyl-D-erythritol + ATP = 4-CDP-2-C-methyl-D-erythritol 2-phosphate + ADP + H(+). It functions in the pathway isoprenoid biosynthesis; isopentenyl diphosphate biosynthesis via DXP pathway; isopentenyl diphosphate from 1-deoxy-D-xylulose 5-phosphate: step 3/6. Its function is as follows. Catalyzes the phosphorylation of the position 2 hydroxy group of 4-diphosphocytidyl-2C-methyl-D-erythritol. In Clostridium tetani (strain Massachusetts / E88), this protein is 4-diphosphocytidyl-2-C-methyl-D-erythritol kinase.